We begin with the raw amino-acid sequence, 253 residues long: Ubiquinone biosynthesis O-methyltransferase (253 aa).

The S-adenosyl-L-methionine site is built by arginine 41, glycine 72, aspartate 93, and leucine 136.

Belongs to the methyltransferase superfamily. UbiG/COQ3 family.

The enzyme catalyses a 3-demethylubiquinol + S-adenosyl-L-methionine = a ubiquinol + S-adenosyl-L-homocysteine + H(+). The catalysed reaction is a 3-(all-trans-polyprenyl)benzene-1,2-diol + S-adenosyl-L-methionine = a 2-methoxy-6-(all-trans-polyprenyl)phenol + S-adenosyl-L-homocysteine + H(+). The protein operates within cofactor biosynthesis; ubiquinone biosynthesis. O-methyltransferase that catalyzes the 2 O-methylation steps in the ubiquinone biosynthetic pathway. In Azorhizobium caulinodans (strain ATCC 43989 / DSM 5975 / JCM 20966 / LMG 6465 / NBRC 14845 / NCIMB 13405 / ORS 571), this protein is Ubiquinone biosynthesis O-methyltransferase.